The primary structure comprises 369 residues: uncharacterized protein (369 aa).

The next 9 membrane-spanning stretches (helical) occupy residues glutamine 25 to tryptophan 45, phenylalanine 47 to alanine 67, leucine 119 to methionine 139, leucine 152 to leucine 172, histidine 206 to valine 226, leucine 235 to leucine 255, proline 272 to glycine 292, phenylalanine 296 to leucine 316, and leucine 323 to alanine 343.

The protein to B.subtilis ComEC.

It localises to the cell membrane. This is an uncharacterized protein from Mycoplasma genitalium (strain ATCC 33530 / DSM 19775 / NCTC 10195 / G37) (Mycoplasmoides genitalium).